A 532-amino-acid polypeptide reads, in one-letter code: Glucose-6-phosphate isomerase (532 aa).

Catalysis depends on E330, which acts as the Proton donor. Catalysis depends on residues H359 and K461.

This sequence belongs to the GPI family.

Its subcellular location is the cytoplasm. It carries out the reaction alpha-D-glucose 6-phosphate = beta-D-fructose 6-phosphate. It participates in carbohydrate biosynthesis; gluconeogenesis. The protein operates within carbohydrate degradation; glycolysis; D-glyceraldehyde 3-phosphate and glycerone phosphate from D-glucose: step 2/4. Functionally, catalyzes the reversible isomerization of glucose-6-phosphate to fructose-6-phosphate. This chain is Glucose-6-phosphate isomerase, found in Synechococcus sp. (strain CC9902).